Consider the following 386-residue polypeptide: Acetylornithine aminotransferase (386 aa).

Pyridoxal 5'-phosphate is bound by residues Gly-96–Ala-97 and Phe-123. Arg-126 lines the N(2)-acetyl-L-ornithine pocket. Asp-208–Gln-211 is a binding site for pyridoxal 5'-phosphate. At Lys-237 the chain carries N6-(pyridoxal phosphate)lysine. Residue Ser-265 coordinates N(2)-acetyl-L-ornithine. Thr-266 lines the pyridoxal 5'-phosphate pocket.

The protein belongs to the class-III pyridoxal-phosphate-dependent aminotransferase family. ArgD subfamily. Homodimer. The cofactor is pyridoxal 5'-phosphate.

The protein localises to the cytoplasm. It catalyses the reaction N(2)-acetyl-L-ornithine + 2-oxoglutarate = N-acetyl-L-glutamate 5-semialdehyde + L-glutamate. It participates in amino-acid biosynthesis; L-arginine biosynthesis; N(2)-acetyl-L-ornithine from L-glutamate: step 4/4. This is Acetylornithine aminotransferase from Bacillus cereus (strain ATCC 14579 / DSM 31 / CCUG 7414 / JCM 2152 / NBRC 15305 / NCIMB 9373 / NCTC 2599 / NRRL B-3711).